The sequence spans 536 residues: Solute carrier family 2, facilitated glucose transporter member 10 (536 aa).

The Cytoplasmic segment spans residues 1–15; that stretch reads MGLRPAVLLLCASVS. The chain crosses the membrane as a helical span at residues 16 to 36; sequence LLGGLTFGYELAVISGALLPL. Residues 37–48 are Extracellular-facing; sequence QLNFGLSCLEQE. Residues 49–69 traverse the membrane as a helical segment; the sequence is LLVGSLLLGALLASLVGGFLI. The Cytoplasmic segment spans residues 70–82; sequence DCYGRRRAILGSN. The helical transmembrane segment at 83–103 threads the bilayer; sequence AVLLAGSLILGLASSLPWLLL. Residues 104–107 are Extracellular-facing; the sequence is GRLS. The chain crosses the membrane as a helical span at residues 108–128; it reads VGFAISLSSMACCIYVSELVG. The Cytoplasmic segment spans residues 129 to 132; it reads PRQR. The helical transmembrane segment at 133-153 threads the bilayer; the sequence is GVLVSLYEVGITVGILFSYGL. The Extracellular portion of the chain corresponds to 154–166; that stretch reads NYVLAGSPWGWRH. The chain crosses the membrane as a helical span at residues 167–187; sequence MFGWAAAPALLQSLSLFLLPA. Topologically, residues 188–232 are cytoplasmic; the sequence is GAEGTAAPKDLIPLQGRETSKPGLVKPQYSFLDLFRAQDGMWSRT. A helical membrane pass occupies residues 233-253; the sequence is VVGLGLVLFQQLTGQPNVLYY. 242 to 243 provides a ligand contact to D-glucose; the sequence is QQ. Over 254-269 the chain is Extracellular; it reads ASTIFRSVGFHGGSSA. A helical membrane pass occupies residues 270–290; that stretch reads VLASVGLGTVKVAATLVATGL. At 291 to 298 the chain is on the cytoplasmic side; that stretch reads VDRAGRRV. A helical transmembrane segment spans residues 299–319; the sequence is LLLFGCALMALSVSGIGLVSF. Topologically, residues 320 to 402 are extracellular; it reads AVSLDSGPSC…VPTSPILEHT (83 aa). Residues 403–423 form a helical membrane-spanning segment; the sequence is LLCWSALVCMMVYVSAFSVGF. Over 424-442 the chain is Cytoplasmic; sequence GPVTWLVLSEIYPAEIRGR. W428 serves as a coordination point for D-glucose. The helical transmembrane segment at 443-463 threads the bilayer; it reads AFAFCSSFNWAANLFISLSFL. The Extracellular segment spans residues 464-468; the sequence is DLIGA. The helical transmembrane segment at 469–489 threads the bilayer; the sequence is IGLAWTFLLYGLTAVLGLAFI. Topologically, residues 490–536 are cytoplasmic; the sequence is YLLVPETKGQSLAEIEQQFQTSRFPLNFGHRQRIGIQYHRLDVSSAS.

The protein belongs to the major facilitator superfamily. Sugar transporter (TC 2.A.1.1) family. Glucose transporter subfamily.

It is found in the endomembrane system. It localises to the cytoplasm. The protein localises to the perinuclear region. The catalysed reaction is D-glucose(out) = D-glucose(in). Its function is as follows. Facilitative glucose transporter required for the development of the cardiovascular system. The sequence is that of Solute carrier family 2, facilitated glucose transporter member 10 from Mus musculus (Mouse).